The primary structure comprises 323 residues: AA9 family lytic polysaccharide monooxygenase A (323 aa).

The first 19 residues, 1-19 (MKSFISLLGLSFLTCHASA), serve as a signal peptide directing secretion. 2 residues coordinate Cu(2+): H20 and H90. C59 and C175 are joined by a disulfide. H161 and Q170 together coordinate O2. Residue Y172 coordinates Cu(2+). N-linked (GlcNAc...) asparagine glycosylation occurs at N215. The CBM1 domain maps to 287–323 (AVVQKFGQCGGQGWTGGTTCVAGSTCTATNAYYSQCL).

It belongs to the polysaccharide monooxygenase AA9 family. The cofactor is Cu(2+).

It localises to the secreted. It carries out the reaction [(1-&gt;4)-beta-D-glucosyl]n+m + reduced acceptor + O2 = 4-dehydro-beta-D-glucosyl-[(1-&gt;4)-beta-D-glucosyl]n-1 + [(1-&gt;4)-beta-D-glucosyl]m + acceptor + H2O.. Its function is as follows. Lytic polysaccharide monooxygenase (LPMO) that depolymerizes crystalline and amorphous polysaccharides via the oxidation of scissile alpha- or beta-(1-4)-glycosidic bonds, yielding C1 and C4 oxidation products. Catalysis by LPMOs requires the reduction of the active-site copper from Cu(II) to Cu(I) by a reducing agent and H(2)O(2) or O(2) as a cosubstrate. The polypeptide is AA9 family lytic polysaccharide monooxygenase A (Botryotinia fuckeliana (strain B05.10) (Noble rot fungus)).